The primary structure comprises 456 residues: Dihydroorotase (456 aa).

Zn(2+)-binding residues include histidine 60 and histidine 62. Residues 62 to 64 and asparagine 94 contribute to the substrate site; that span reads HFR. Zn(2+) is bound by residues glutamate 146, histidine 180, histidine 234, and aspartate 313. The active site involves aspartate 313. Histidine 317 serves as a coordination point for substrate.

This sequence belongs to the metallo-dependent hydrolases superfamily. DHOase family. Class I DHOase subfamily. Zn(2+) serves as cofactor.

The enzyme catalyses (S)-dihydroorotate + H2O = N-carbamoyl-L-aspartate + H(+). It functions in the pathway pyrimidine metabolism; UMP biosynthesis via de novo pathway; (S)-dihydroorotate from bicarbonate: step 3/3. In terms of biological role, catalyzes the reversible cyclization of carbamoyl aspartate to dihydroorotate. The chain is Dihydroorotase from Methanosarcina mazei (strain ATCC BAA-159 / DSM 3647 / Goe1 / Go1 / JCM 11833 / OCM 88) (Methanosarcina frisia).